Reading from the N-terminus, the 291-residue chain is Aspartate carbamoyltransferase catalytic subunit (291 aa).

The carbamoyl phosphate site is built by Arg-49 and Thr-50. An L-aspartate-binding site is contributed by Lys-77. Carbamoyl phosphate is bound by residues Arg-99, His-127, and Gln-130. 2 residues coordinate L-aspartate: Arg-160 and Arg-210. Positions 249 and 250 each coordinate carbamoyl phosphate.

This sequence belongs to the aspartate/ornithine carbamoyltransferase superfamily. ATCase family. In terms of assembly, heterododecamer (2C3:3R2) of six catalytic PyrB chains organized as two trimers (C3), and six regulatory PyrI chains organized as three dimers (R2).

It catalyses the reaction carbamoyl phosphate + L-aspartate = N-carbamoyl-L-aspartate + phosphate + H(+). The protein operates within pyrimidine metabolism; UMP biosynthesis via de novo pathway; (S)-dihydroorotate from bicarbonate: step 2/3. Functionally, catalyzes the condensation of carbamoyl phosphate and aspartate to form carbamoyl aspartate and inorganic phosphate, the committed step in the de novo pyrimidine nucleotide biosynthesis pathway. The sequence is that of Aspartate carbamoyltransferase catalytic subunit from Sulfurimonas denitrificans (strain ATCC 33889 / DSM 1251) (Thiomicrospira denitrificans (strain ATCC 33889 / DSM 1251)).